A 259-amino-acid chain; its full sequence is Putative hydro-lyase Bphyt_4813 (259 aa).

This sequence belongs to the D-glutamate cyclase family.

The polypeptide is Putative hydro-lyase Bphyt_4813 (Paraburkholderia phytofirmans (strain DSM 17436 / LMG 22146 / PsJN) (Burkholderia phytofirmans)).